Here is a 278-residue protein sequence, read N- to C-terminus: Checkpoint protein Hus1-like (278 aa).

The protein belongs to the HUS1 family. In terms of assembly, component of the 9-1-1 checkpoint clamp complex consisting of Rad9 isoform A, Rad1 and Hus1-like; the interactions with Rad1 and Rad9 are direct. This complex probably also forms with Rad9 isoform B, however 9-1-1 complex containing Rad9 isoform A localizes to the nuclear periphery. As to expression, expressed in ovary.

It is found in the cytoplasm. The protein resides in the nucleus envelope. Functionally, component of the 9-1-1 checkpoint clamp complex. Involved in both meiotic and somatic DNA damage responses. Essential for activation of the meiotic checkpoint in response to double-strand DNA breaks; required for the S-phase checkpoint but not the G2-M phase checkpoint. Involved in double strand break repair by homologous recombination during meiosis; influences the organization of chromosomal DNA in the meiotic nucleus. The protein is Checkpoint protein Hus1-like of Drosophila melanogaster (Fruit fly).